The sequence spans 336 residues: Small ribosomal subunit protein RACK1y (336 aa).

WD repeat units lie at residues 15–55 (GHND…TAVA), 74–113 (GHSH…TTRR), 116–155 (GHTK…KYTI), 164–205 (GHTG…LRTK), 208–247 (GHNG…MLYK), 249–287 (DAGA…VMQD), and 297–336 (SQML…GYAI).

This sequence belongs to the WD repeat G protein beta family. Ribosomal protein RACK1 subfamily. As to quaternary structure, homodimer and heterodimer with RACK1A.

In terms of biological role, component of the RACK1 regulatory proteins that play a role in multiple signal transduction pathways. The chain is Small ribosomal subunit protein RACK1y (RACK1B) from Oryza sativa subsp. japonica (Rice).